The primary structure comprises 188 residues: MAASIFTGAVRAASGIFRPLNVLASSTYRNCARNACLNSSLCTIHFRHIQTSVVSSAPRLVTSVGHLAYGHTTTVLNRVATLVPSVLKPPVRALTYCSTRKGKRKTVKSVVHRFLRLHSGLWLRRKAGYKKKLWKKSTARKKRLREFVFCSKTQSKLLDKMTTSFWKRRNWYAGDPYQMYHDRTNLRV.

This sequence belongs to the bacterial ribosomal protein bL35 family.

The protein localises to the mitochondrion. The chain is Large ribosomal subunit protein bL35m (Mrpl35) from Mus musculus (Mouse).